The chain runs to 363 residues: Peptide chain release factor 2 (363 aa).

Residue Gln251 is modified to N5-methylglutamine.

It belongs to the prokaryotic/mitochondrial release factor family. Post-translationally, methylated by PrmC. Methylation increases the termination efficiency of RF2.

The protein resides in the cytoplasm. Functionally, peptide chain release factor 2 directs the termination of translation in response to the peptide chain termination codons UGA and UAA. In Helicobacter pylori (strain HPAG1), this protein is Peptide chain release factor 2.